The following is a 790-amino-acid chain: Probable copper-transporting ATPase SynA (790 aa).

Over Met-1–Gln-105 the chain is Cytoplasmic. One can recognise an HMA domain in the interval Thr-14 to Gln-81. Residues Cys-25 and Cys-28 each contribute to the Cu(+) site. A helical membrane pass occupies residues Leu-106–His-127. Residues Pro-128–Trp-136 are Extracellular-facing. A helical transmembrane segment spans residues Phe-137–Ala-156. The Cytoplasmic portion of the chain corresponds to Gly-157–Cys-163. Residues Gly-164 to Leu-184 form a helical membrane-spanning segment. Topologically, residues Val-185 to Phe-198 are extracellular. The helical transmembrane segment at Asp-199–Arg-219 threads the bilayer. At Phe-220 to Ala-358 the chain is on the cytoplasmic side. Residues Ile-359–Leu-381 form a helical membrane-spanning segment. The Extracellular segment spans residues Gly-382–Ala-420. A helical membrane pass occupies residues Leu-421–Leu-438. The Cytoplasmic portion of the chain corresponds to Ala-439 to Ile-723. The active-site 4-aspartylphosphate intermediate is Asp-476. Mg(2+) is bound by residues Asp-669 and Asp-673. The chain crosses the membrane as a helical span at residues Arg-724–Gly-743. Residues Ala-744–Pro-755 are Extracellular-facing. Residues Ala-756–Leu-774 traverse the membrane as a helical segment. Over Leu-775–Val-790 the chain is Cytoplasmic.

The protein belongs to the cation transport ATPase (P-type) (TC 3.A.3) family. Type IB subfamily.

Its subcellular location is the cell membrane. It carries out the reaction Cu(+)(in) + ATP + H2O = Cu(+)(out) + ADP + phosphate + H(+). Involved in copper transport. This is Probable copper-transporting ATPase SynA (synA) from Synechococcus elongatus (strain ATCC 33912 / PCC 7942 / FACHB-805) (Anacystis nidulans R2).